Consider the following 313-residue polypeptide: MAFTLTIPRFSAISRKPITCSSSRTQCPAPFTHGRSISLRRRLTLLPLKASTDQSGQVGGEEVDSKILPYCSINKNEKRTIGEMEQEFLQAMQSFYYEGKAIMSNEEFDNLKEELMWEGSSVVMLSSDEQRFLEASMAYVSGNPILSDEEYDKLKMKLKMDGSEIVCEGPRCSLRSKKVYSDLAIDYFKMFLLNVPATVVALGLFFFLDDITGFEITYLLELPEPFSFIFTWFAAVPAIVYLALSLTKLILKDFLILKGPCPNCGTENVSFFGTILSIPNDSNTNNVKCSGCGTEMVYDSGSRLITLPEGGKA.

Residues 1 to 49 constitute a chloroplast transit peptide; sequence MAFTLTIPRFSAISRKPITCSSSRTQCPAPFTHGRSISLRRRLTLLPLK. Ala-50 bears the N-acetylalanine mark. The Stromal portion of the chain corresponds to 50 to 187; that stretch reads ASTDQSGQVG…KVYSDLAIDY (138 aa). The cysteines at positions 71 and 172 are disulfide-linked. The chain crosses the membrane as a helical span at residues 188 to 208; that stretch reads FKMFLLNVPATVVALGLFFFL. Residues 209-225 lie on the Lumenal, thylakoid side of the membrane; the sequence is DDITGFEITYLLELPEP. Residues 226-246 traverse the membrane as a helical segment; the sequence is FSFIFTWFAAVPAIVYLALSL. Residues 247-313 lie on the Stromal side of the membrane; the sequence is TKLILKDFLI…LITLPEGGKA (67 aa).

It belongs to the PGR5 family. As to quaternary structure, homodimer and heterodimer with PGR5. Interacts with PGR5, FD2, psaD1, LFNR1 and LFNR2. Also interacts with petC and a Fe-containing cofactor (FCC). Post-translationally, disulfide bonds; Cys-289 and Cys-292 are probably involved in the formation of disulfide bridges with 'Cys-11' and 'Cys-105' of PGR5 while Cys-261 and Cys-264 are probably involved in the binding of a Fe-containing cofactor (FCC).

It is found in the plastid. The protein resides in the chloroplast thylakoid membrane. Its activity is regulated as follows. Inhibited by antimycin A. Functionally, ferredoxin-plastoquinone reductase involved in cyclic electron flow (CEF) around photosystem I. The homodimer is probably not involved in CEF. The protein is PGR5-like protein 1B, chloroplastic (PGRL1B) of Arabidopsis thaliana (Mouse-ear cress).